The primary structure comprises 380 residues: Cytochrome b (380 aa).

A run of 4 helical transmembrane segments spans residues 33–53 (FGSL…FLAM), 77–98 (WLIR…YLHI), 113–133 (WNVG…GYVL), and 178–198 (FFAF…LHFL). The heme b site is built by His83 and His97. Residues His182 and His196 each coordinate heme b. His201 contributes to the a ubiquinone binding site. The next 4 membrane-spanning stretches (helical) occupy residues 226-246 (YKDL…SLFS), 288-308 (LGGV…PILH), 320-340 (LTQI…WIGG), and 347-367 (FIIV…VIMP).

It belongs to the cytochrome b family. The cytochrome bc1 complex contains 3 respiratory subunits (MT-CYB, CYC1 and UQCRFS1), 2 core proteins (UQCRC1 and UQCRC2) and probably 6 low-molecular weight proteins. The cofactor is heme b.

It is found in the mitochondrion inner membrane. Its function is as follows. Component of the ubiquinol-cytochrome c reductase complex (complex III or cytochrome b-c1 complex) that is part of the mitochondrial respiratory chain. The b-c1 complex mediates electron transfer from ubiquinol to cytochrome c. Contributes to the generation of a proton gradient across the mitochondrial membrane that is then used for ATP synthesis. The chain is Cytochrome b (mt-cyb) from Zeus faber (John Dory).